The following is a 230-amino-acid chain: PKHD-type hydroxylase Xfasm12_1709 (230 aa).

The Fe2OG dioxygenase domain occupies 78–182 (RTLPPRFNRY…RIASFFWVQS (105 aa)). The Fe cation site is built by histidine 96, aspartate 98, and histidine 163. Arginine 173 lines the 2-oxoglutarate pocket.

Fe(2+) is required as a cofactor. Requires L-ascorbate as cofactor.

The polypeptide is PKHD-type hydroxylase Xfasm12_1709 (Xylella fastidiosa (strain M12)).